Here is a 352-residue protein sequence, read N- to C-terminus: UDP-N-acetylglucosamine--N-acetylmuramyl-(pentapeptide) pyrophosphoryl-undecaprenol N-acetylglucosamine transferase (352 aa).

Positions 195 and 287 each coordinate UDP-N-acetyl-alpha-D-glucosamine.

Belongs to the glycosyltransferase 28 family. MurG subfamily.

Its subcellular location is the cell membrane. The catalysed reaction is Mur2Ac(oyl-L-Ala-gamma-D-Glu-L-Lys-D-Ala-D-Ala)-di-trans,octa-cis-undecaprenyl diphosphate + UDP-N-acetyl-alpha-D-glucosamine = beta-D-GlcNAc-(1-&gt;4)-Mur2Ac(oyl-L-Ala-gamma-D-Glu-L-Lys-D-Ala-D-Ala)-di-trans,octa-cis-undecaprenyl diphosphate + UDP + H(+). Its pathway is cell wall biogenesis; peptidoglycan biosynthesis. Its function is as follows. Cell wall formation. Catalyzes the transfer of a GlcNAc subunit on undecaprenyl-pyrophosphoryl-MurNAc-pentapeptide (lipid intermediate I) to form undecaprenyl-pyrophosphoryl-MurNAc-(pentapeptide)GlcNAc (lipid intermediate II). This is UDP-N-acetylglucosamine--N-acetylmuramyl-(pentapeptide) pyrophosphoryl-undecaprenol N-acetylglucosamine transferase from Streptococcus pneumoniae (strain Hungary19A-6).